A 471-amino-acid polypeptide reads, in one-letter code: ATP synthase subunit beta (471 aa).

154–161 provides a ligand contact to ATP; it reads GGAGVGKT.

This sequence belongs to the ATPase alpha/beta chains family. F-type ATPases have 2 components, CF(1) - the catalytic core - and CF(0) - the membrane proton channel. CF(1) has five subunits: alpha(3), beta(3), gamma(1), delta(1), epsilon(1). CF(0) has three main subunits: a(1), b(2) and c(9-12). The alpha and beta chains form an alternating ring which encloses part of the gamma chain. CF(1) is attached to CF(0) by a central stalk formed by the gamma and epsilon chains, while a peripheral stalk is formed by the delta and b chains.

Its subcellular location is the cell membrane. The enzyme catalyses ATP + H2O + 4 H(+)(in) = ADP + phosphate + 5 H(+)(out). Functionally, produces ATP from ADP in the presence of a proton gradient across the membrane. The catalytic sites are hosted primarily by the beta subunits. This is ATP synthase subunit beta from Mesomycoplasma hyopneumoniae (strain J / ATCC 25934 / NCTC 10110) (Mycoplasma hyopneumoniae).